Reading from the N-terminus, the 199-residue chain is NAD(P)H dehydrogenase (quinone) (199 aa).

Positions 4–190 (VLVLYYSAYG…DGARYQGRKI (187 aa)) constitute a Flavodoxin-like domain. FMN contacts are provided by residues 10 to 15 (SAYGHI) and 78 to 80 (TRF). An NAD(+)-binding site is contributed by Tyr12. Trp98 is a substrate binding site. FMN-binding positions include 113-119 (STATQHG) and His134.

The protein belongs to the WrbA family. It depends on FMN as a cofactor.

The enzyme catalyses a quinone + NADH + H(+) = a quinol + NAD(+). The catalysed reaction is a quinone + NADPH + H(+) = a quinol + NADP(+). The sequence is that of NAD(P)H dehydrogenase (quinone) from Xanthobacter autotrophicus (strain ATCC BAA-1158 / Py2).